The following is a 335-amino-acid chain: dTDP-glucose 4,6-dehydratase (335 aa).

NAD(+)-binding positions include 11 to 12 (FI), 38 to 41 (DKLT), 61 to 62 (DI), 81 to 85 (FAAET), and Thr-100. Thr-85 is a binding site for substrate. Thr-125 provides a ligand contact to substrate. Asp-126 functions as the Proton donor in the catalytic mechanism. Residues Glu-127 and Tyr-149 each act as proton acceptor in the active site. 149–153 (YSASK) serves as a coordination point for NAD(+). Asn-178 contributes to the substrate binding site. Asn-179 is a binding site for NAD(+). Substrate is bound by residues 188–189 (KI), 204–206 (PLY), Arg-213, Asn-248, and 271–275 (DRKGH).

It belongs to the NAD(P)-dependent epimerase/dehydratase family. dTDP-glucose dehydratase subfamily. NAD(+) is required as a cofactor.

It carries out the reaction dTDP-alpha-D-glucose = dTDP-4-dehydro-6-deoxy-alpha-D-glucose + H2O. The protein operates within antibiotic biosynthesis. Involved in the biosynthesis of the two 2,6-deoxysugars, dTDP-L-oleandrose and dTDP-D-desosamine, attached to the macrolactone ring oleandolide to produce the aglycone antibiotic oleandomycin. Catalyzes the dehydration of dTDP-D-glucose to form dTDP-6-deoxy-D-xylo-4-hexulose via a three-step process involving oxidation, dehydration and reduction. The polypeptide is dTDP-glucose 4,6-dehydratase (Streptomyces antibioticus).